Here is a 183-residue protein sequence, read N- to C-terminus: GMP synthase [glutamine-hydrolyzing] subunit A (183 aa).

One can recognise a Glutamine amidotransferase type-1 domain in the interval 2–183; the sequence is KIYVIYNYGQ…YRNFIEICKK (182 aa). C74 (nucleophile) is an active-site residue. Residues H161 and E163 contribute to the active site.

In terms of assembly, heterodimer composed of a glutamine amidotransferase subunit (A) and a GMP-binding subunit (B).

The catalysed reaction is XMP + L-glutamine + ATP + H2O = GMP + L-glutamate + AMP + diphosphate + 2 H(+). It participates in purine metabolism; GMP biosynthesis; GMP from XMP (L-Gln route): step 1/1. In terms of biological role, catalyzes the synthesis of GMP from XMP. The polypeptide is GMP synthase [glutamine-hydrolyzing] subunit A (Archaeoglobus fulgidus (strain ATCC 49558 / DSM 4304 / JCM 9628 / NBRC 100126 / VC-16)).